A 100-amino-acid polypeptide reads, in one-letter code: ATP synthase subunit c (100 aa).

2 helical membrane passes run 27-47 and 72-92; these read SVIA…IGMG and FIAL…TLIV.

The protein belongs to the ATPase C chain family. As to quaternary structure, F-type ATPases have 2 components, F(1) - the catalytic core - and F(0) - the membrane proton channel. F(1) has five subunits: alpha(3), beta(3), gamma(1), delta(1), epsilon(1). F(0) has three main subunits: a(1), b(2) and c(10-14). The alpha and beta chains form an alternating ring which encloses part of the gamma chain. F(1) is attached to F(0) by a central stalk formed by the gamma and epsilon chains, while a peripheral stalk is formed by the delta and b chains.

Its subcellular location is the cell inner membrane. Its function is as follows. F(1)F(0) ATP synthase produces ATP from ADP in the presence of a proton or sodium gradient. F-type ATPases consist of two structural domains, F(1) containing the extramembraneous catalytic core and F(0) containing the membrane proton channel, linked together by a central stalk and a peripheral stalk. During catalysis, ATP synthesis in the catalytic domain of F(1) is coupled via a rotary mechanism of the central stalk subunits to proton translocation. The sequence is that of ATP synthase subunit c from Campylobacter curvus (strain 525.92).